The sequence spans 261 residues: Synaptophysin-like protein 1 (261 aa).

The Cytoplasmic portion of the chain corresponds to methionine 1–leucine 33. Residues proline 28–serine 239 enclose the MARVEL domain. Residues glycine 34–phenylalanine 54 form a helical membrane-spanning segment. Topologically, residues lysine 55–glutamine 117 are vesicular. 2 N-linked (GlcNAc...) asparagine glycosylation sites follow: asparagine 72 and asparagine 95. Residues phenylalanine 118–valine 138 traverse the membrane as a helical segment. The Cytoplasmic segment spans residues glycine 139–proline 151. The helical transmembrane segment at methionine 152–tryptophan 172 threads the bilayer. At alanine 173–asparagine 214 the chain is on the vesicular side. Asparagine 214 carries an N-linked (GlcNAc...) asparagine glycan. A helical transmembrane segment spans residues valine 215–tyrosine 235. Residues lysine 236–methionine 261 lie on the Cytoplasmic side of the membrane. Polar residues predominate over residues histidine 241–serine 251. Residues histidine 241–methionine 261 are disordered. Residues glutamine 252–methionine 261 are compositionally biased toward gly residues.

Belongs to the synaptophysin/synaptobrevin family. In terms of tissue distribution, ubiquitously expressed.

It is found in the cytoplasmic vesicle membrane. The protein resides in the melanosome. The sequence is that of Synaptophysin-like protein 1 (Sypl1) from Mus musculus (Mouse).